The sequence spans 123 residues: Large ribosomal subunit protein uL24 (123 aa).

Residues 100-123 (RRPDGSTYKAERSVRISRKTGKEI) are disordered.

Belongs to the universal ribosomal protein uL24 family. In terms of assembly, part of the 50S ribosomal subunit.

One of two assembly initiator proteins, it binds directly to the 5'-end of the 23S rRNA, where it nucleates assembly of the 50S subunit. Its function is as follows. One of the proteins that surrounds the polypeptide exit tunnel on the outside of the subunit. This Nocardioides sp. (strain ATCC BAA-499 / JS614) protein is Large ribosomal subunit protein uL24.